Here is a 125-residue protein sequence, read N- to C-terminus: Fluoride-specific ion channel FluC (125 aa).

The next 4 membrane-spanning stretches (helical) occupy residues 6 to 26 (VLVM…GLGI), 35 to 55 (FLFG…GLFA), 66 to 86 (LLLL…ALSI), and 100 to 120 (AMGY…AGYL). 2 residues coordinate Na(+): Gly76 and Thr79.

This sequence belongs to the fluoride channel Fluc/FEX (TC 1.A.43) family.

It is found in the cell inner membrane. The catalysed reaction is fluoride(in) = fluoride(out). Na(+) is not transported, but it plays an essential structural role and its presence is essential for fluoride channel function. In terms of biological role, fluoride-specific ion channel. Important for reducing fluoride concentration in the cell, thus reducing its toxicity. The protein is Fluoride-specific ion channel FluC of Gloeobacter violaceus (strain ATCC 29082 / PCC 7421).